The primary structure comprises 113 residues: U11-theraphotoxin-Hhn1k (113 aa).

The signal sequence occupies residues 1–21; it reads MNTVRVTFLLVFVLAVSLGQA. The propeptide occupies 22–74; it reads DKDENRMEMQEKTEQGKSYLDFAENLLLQKLEELEAKLLEEDSEESRNSRQKR. A disordered region spans residues 61–83; it reads EEDSEESRNSRQKRCIGEGVPCD. Cystine bridges form between Cys75–Cys90, Cys82–Cys95, and Cys89–Cys110.

This sequence belongs to the neurotoxin 14 (magi-1) family. 01 (HNTX-16) subfamily. In terms of tissue distribution, expressed by the venom gland.

Its subcellular location is the secreted. Functionally, probable ion channel inhibitor. In Cyriopagopus hainanus (Chinese bird spider), this protein is U11-theraphotoxin-Hhn1k.